A 150-amino-acid chain; its full sequence is Actin-depolymerizing factor 3 (150 aa).

The ADF-H domain occupies 7–150 (GVAVSEECKA…TLDVLKDHTS (144 aa)).

This sequence belongs to the actin-binding proteins ADF family.

In terms of biological role, actin-depolymerizing protein. Severs actin filaments (F-actin) and binds to actin monomers. This is Actin-depolymerizing factor 3 (ADF3) from Oryza sativa subsp. japonica (Rice).